The sequence spans 505 residues: MVNIRPDEISSIIRKQIEQYTQEVKVVNIGTVLQVGDGIARIYGLDKVMAGELLEFEDGTIGIALNLESDNVGAVLMGDGLTIQEGSSVKATGKIAQIPVSDGYLGRVVNALARPIDGKGDIASSEFRLIESPAPGIISRRSVYEPMQTGLIAIDAMIPIGRGQRELIIGDRQTGKTAVATDTILNQKGQNVICVYVAIGQKASSVAQVVNTFEERGAMDYTIVVAETANAPATLQYLAPYTGAALAEYFMYKGQHTLVVYDDLSKQAQAYRQMSLLLRRPPGREAYPGDVFYLHSRLLERAAKLGSQLGEGSMTALPIVETQAGDVSAYIPTNVISITDGQIFLSADLFNSGIRPAINVGISVSRVGSAAQIKAMKQVAGKLKLELAQFAELEAFSQFASDLDKATQNQLARGQRLRELLKQAQSAPLSVEQQVATIFTGVNGYLDVIEVSQVRSFLTQLREYIITNKPQFGEIIRSTKTFTDEAQTILKQAIQEHTEAFLLQQ.

ATP is bound at residue 170-177; it reads GDRQTGKT.

The protein belongs to the ATPase alpha/beta chains family. As to quaternary structure, F-type ATPases have 2 components, CF(1) - the catalytic core - and CF(0) - the membrane proton channel. CF(1) has five subunits: alpha(3), beta(3), gamma(1), delta(1), epsilon(1). CF(0) has four main subunits: a, b, b' and c.

The protein localises to the plastid. It is found in the chloroplast thylakoid membrane. The catalysed reaction is ATP + H2O + 4 H(+)(in) = ADP + phosphate + 5 H(+)(out). Its function is as follows. Produces ATP from ADP in the presence of a proton gradient across the membrane. The alpha chain is a regulatory subunit. The sequence is that of ATP synthase subunit alpha, chloroplastic from Zygnema circumcarinatum (Green alga).